We begin with the raw amino-acid sequence, 301 residues long: MSRGLIVICGATATGKTALALEIAQSLNSIIISADSRQVYREFDIGTAKPTPAEQDLIPHYLIDICDPRETLTLAEYQEKAQSLIDKNLTNFPLLVGGTGLYIKSIVKGLKIPRVAPQPRLRFQLEALGQQQCYQILQQVDTISSQKIHPNDQVRTLRALEVFYVTGIPISQQQGENPPTYPIVQIGLDCSTEELKRRIEIRTKKMLEMGFVEEVEKLVKKYGWELPLFKTLGYAEILNYLQGKLSLSEAEREIILHTRQFAKRQRTWFRAYPEIEWFDTTSPDLVENVFSKLTETLGLLN.

Residue glycine 10–threonine 17 participates in ATP binding. Residue threonine 12–threonine 17 participates in substrate binding. The interval aspartate 35–glutamine 38 is interaction with substrate tRNA.

The protein belongs to the IPP transferase family. Monomer. It depends on Mg(2+) as a cofactor.

The enzyme catalyses adenosine(37) in tRNA + dimethylallyl diphosphate = N(6)-dimethylallyladenosine(37) in tRNA + diphosphate. Catalyzes the transfer of a dimethylallyl group onto the adenine at position 37 in tRNAs that read codons beginning with uridine, leading to the formation of N6-(dimethylallyl)adenosine (i(6)A). This Crocosphaera subtropica (strain ATCC 51142 / BH68) (Cyanothece sp. (strain ATCC 51142)) protein is tRNA dimethylallyltransferase.